The following is a 398-amino-acid chain: NADH-quinone oxidoreductase subunit D (398 aa).

This sequence belongs to the complex I 49 kDa subunit family. NDH-1 is composed of 14 different subunits. Subunits NuoB, C, D, E, F, and G constitute the peripheral sector of the complex.

The protein resides in the cell inner membrane. It carries out the reaction a quinone + NADH + 5 H(+)(in) = a quinol + NAD(+) + 4 H(+)(out). Its function is as follows. NDH-1 shuttles electrons from NADH, via FMN and iron-sulfur (Fe-S) centers, to quinones in the respiratory chain. The immediate electron acceptor for the enzyme in this species is believed to be ubiquinone. Couples the redox reaction to proton translocation (for every two electrons transferred, four hydrogen ions are translocated across the cytoplasmic membrane), and thus conserves the redox energy in a proton gradient. This chain is NADH-quinone oxidoreductase subunit D, found in Rhodospirillum centenum (strain ATCC 51521 / SW).